The sequence spans 1419 residues: Myosin-2B (1419 aa).

The 54-residue stretch at 4–57 (EVGTRCWYPNSEAGWIGCEVTKNDFQDGTYHIELTSETGLVIPIETKHLESNNA) folds into the Myosin N-terminal SH3-like domain. The Myosin motor domain maps to 75 to 780 (EATHDLTTLS…VLAYLEKIRS (706 aa)). Residue 169–176 (GESGAGKT) participates in ATP binding. The segment at 451–531 (FIGVLDIYGF…LGILSLLDEE (81 aa)) is actin-binding. IQ domains lie at 783-805 (VTEL…LYLQ), 806-830 (AMLS…DFEM), 831-854 (KTDA…VFET), 855-878 (LKNI…QREF), 879-901 (ESRS…RYQT), and 902-931 (LKTG…QAES). Residues 909-940 (IQALVRRKQSQEKLKQLKIQAESAASLKNSAA) adopt a coiled-coil conformation. Residues 1061-1419 (KDNERTSTSS…VIKELGSLLA (359 aa)) form a non alpha-helical, tail domain region. The 215-residue stretch at 1143 to 1357 (HSILKQTVQD…LNHLSNTARR (215 aa)) folds into the Dilute domain.

It belongs to the TRAFAC class myosin-kinesin ATPase superfamily. Myosin family. Homodimer. Interacts with calmodulin (CMD1) and the myosin light chain MLC1 through its IQ repeats.

Its function is as follows. Myosin heavy chain that is required for the cell cycle-regulated transport of various organelles and proteins for their segregation. Functions by binding with its tail domain to receptor proteins on organelles and exerting force with its N-terminal motor domain against actin filaments, thereby transporting its cargo along polarized actin cables. The polypeptide is Myosin-2B (MYO2B) (Naumovozyma castellii (Yeast)).